The primary structure comprises 431 residues: Glutamate--tRNA ligase 1 (431 aa).

A 'HIGH' region motif is present at residues 6 to 16 (PSPTGDMHIGN). The 'KMSKS' region signature appears at 235-239 (KMSKR). Lys238 serves as a coordination point for ATP.

This sequence belongs to the class-I aminoacyl-tRNA synthetase family. Glutamate--tRNA ligase type 1 subfamily. Monomer.

The protein localises to the cytoplasm. The enzyme catalyses tRNA(Glu) + L-glutamate + ATP = L-glutamyl-tRNA(Glu) + AMP + diphosphate. Catalyzes the attachment of glutamate to tRNA(Glu) in a two-step reaction: glutamate is first activated by ATP to form Glu-AMP and then transferred to the acceptor end of tRNA(Glu). The protein is Glutamate--tRNA ligase 1 of Campylobacter jejuni (strain RM1221).